Consider the following 431-residue polypeptide: Adenylosuccinate synthetase (431 aa).

Residues 12–18 (GDEGKGK) and 40–42 (GHT) each bind GTP. Asp13 acts as the Proton acceptor in catalysis. The Mg(2+) site is built by Asp13 and Gly40. Residues 13–16 (DEGK), 38–41 (NAGH), Thr129, Arg143, Gln224, Thr239, and Arg303 contribute to the IMP site. The active-site Proton donor is His41. 299–305 (VTTGRAR) lines the substrate pocket. GTP contacts are provided by residues Arg305, 331 to 333 (KLD), and 413 to 415 (GVG).

It belongs to the adenylosuccinate synthetase family. Homodimer. Mg(2+) is required as a cofactor.

The protein localises to the cytoplasm. It carries out the reaction IMP + L-aspartate + GTP = N(6)-(1,2-dicarboxyethyl)-AMP + GDP + phosphate + 2 H(+). It participates in purine metabolism; AMP biosynthesis via de novo pathway; AMP from IMP: step 1/2. Its function is as follows. Plays an important role in the de novo pathway of purine nucleotide biosynthesis. Catalyzes the first committed step in the biosynthesis of AMP from IMP. This is Adenylosuccinate synthetase from Mycobacterium sp. (strain KMS).